We begin with the raw amino-acid sequence, 145 residues long: MAAHELKEALETLKETGVRITPQRHAILEYLVNSMAHPTADDIYKALEGKFPNMSVATVYNNLRVFRESGLVKELTYGDASSRFDFVTSDHYHAICENCGKIVDFHYPGLDEVEQLAAHVTGFKVSHHRLEIYGVCQECSKKENH.

A DNA-binding region spans residues 1–78 (MAAHELKEAL…SGLVKELTYG (78 aa)). 4 residues coordinate Zn(2+): C96, C99, C136, and C139.

The protein belongs to the Fur family. As to quaternary structure, homodimer. The cofactor is Mn(2+). Requires Fe(2+) as cofactor. It depends on Zn(2+) as a cofactor. Possibly oxidized on a cysteine residue; the Cys-SOH formed in response to oxidative signaling may rapidly react with a Cys-SH to form a disulfide bond, leading to the loss of metal ion and inactivation of repressor function. Oxidized PerR can be further reduced by thiol reductants and repressor activity restored.

It is found in the cytoplasm. Hydrogen and organic peroxide sensor. Represses the expression of a regulon of peroxide-inducible genes such as katA, ahpC, ahpF, the heme biosynthesis operon (hemAXCDBL), fur, perR, zosA and mrgA. The chain is Peroxide operon regulator (perR) from Bacillus subtilis (strain 168).